The following is a 180-amino-acid chain: Large ribosomal subunit protein uL6 (180 aa).

The protein belongs to the universal ribosomal protein uL6 family. Part of the 50S ribosomal subunit.

Functionally, this protein binds to the 23S rRNA, and is important in its secondary structure. It is located near the subunit interface in the base of the L7/L12 stalk, and near the tRNA binding site of the peptidyltransferase center. The chain is Large ribosomal subunit protein uL6 from Salinispora arenicola (strain CNS-205).